The chain runs to 374 residues: Histidinol-phosphate aminotransferase 1 (374 aa).

Residue K232 is modified to N6-(pyridoxal phosphate)lysine.

The protein belongs to the class-II pyridoxal-phosphate-dependent aminotransferase family. Histidinol-phosphate aminotransferase subfamily. As to quaternary structure, homodimer. Pyridoxal 5'-phosphate is required as a cofactor.

It carries out the reaction L-histidinol phosphate + 2-oxoglutarate = 3-(imidazol-4-yl)-2-oxopropyl phosphate + L-glutamate. It participates in amino-acid biosynthesis; L-histidine biosynthesis; L-histidine from 5-phospho-alpha-D-ribose 1-diphosphate: step 7/9. This chain is Histidinol-phosphate aminotransferase 1 (hisC1), found in Ralstonia nicotianae (strain ATCC BAA-1114 / GMI1000) (Ralstonia solanacearum).